A 974-amino-acid polypeptide reads, in one-letter code: Phosphoenolpyruvate carboxylase 1 (974 aa).

Residues His164 and Lys604 contribute to the active site.

Belongs to the PEPCase type 1 family. Exists as a homotetramer or heterooligomer. Mg(2+) serves as cofactor.

It localises to the cytoplasm. The catalysed reaction is oxaloacetate + phosphate = phosphoenolpyruvate + hydrogencarbonate. Activated by glutamine and dihydroxyacetone phosphate. Inhibited by glutamate, aspartate, 2-oxoglutarate and malate. In terms of biological role, through the carboxylation of phosphoenolpyruvate (PEP) it forms oxaloacetate, a four-carbon dicarboxylic acid source for the tricarboxylic acid cycle. The sequence is that of Phosphoenolpyruvate carboxylase 1 from Chlamydomonas reinhardtii (Chlamydomonas smithii).